We begin with the raw amino-acid sequence, 256 residues long: Neuroendocrine secretory protein 55 (256 aa).

The first 46 residues, 1 to 46 (MDRRSRAHQWRRARHNYNDLCPPIGRRAATALLWLSCSIALLRALA), serve as a signal peptide directing secretion. A disordered region spans residues 61-256 (SFLNAHHRSA…RKGPIPIRRH (196 aa)). A compositionally biased stretch (basic and acidic residues) spans 86-103 (ESDHEHEEAEPELARPEC). Acidic residues-rich tracts occupy residues 104–139 (LEYD…ETEP) and 206–216 (LDEDPRDPEES). The span at 225–236 (QPRRCKTRRPAR) shows a compositional bias: basic residues.

Belongs to the NESP55 family. Binds keratan sulfate chains. Post-translationally, may be proteolytically processed to give rise to a number of active peptides.

The protein resides in the cytoplasmic vesicle. It is found in the secretory vesicle. Its subcellular location is the synaptic vesicle. It localises to the secreted. This Rattus norvegicus (Rat) protein is Neuroendocrine secretory protein 55.